The chain runs to 379 residues: Transaminase htyB (379 aa).

R92 lines the pyridoxal 5'-phosphate pocket. K203 is modified (N6-(pyridoxal phosphate)lysine). E239 serves as a coordination point for pyridoxal 5'-phosphate.

The protein belongs to the class-IV pyridoxal-phosphate-dependent aminotransferase family. Pyridoxal 5'-phosphate is required as a cofactor.

It functions in the pathway antifungal biosynthesis. Its function is as follows. Transaminase; part of the gene cluster that mediates the de novo generation of L-homotyrosine from acetyl-CoA and 4-hydroxyphenyl-pyruvate. L-homotyrosine is a building block of echinocandin B, a fungal lipidated cyclic hexapeptide that acts as an antifungal agent. L-homotyrosine 4-hydroxyphenyl-pyruvate first undergoes an aldol-type condensation by htyA with the C-2 of acetyl-CoA followed by the release of CoA to form 2-(4-hydroxybenzyl)-malate. This is followed by isomerization of 2-(4-hydroxy-benzyl)-malate to 3-(4-hydroxybenzyl)-malate by htyD. Thereafter, 3-(4-hydroxybenzyl)-malate undergoes decarboxylation and oxidation to form 2-oxo-4-(4-hydroxybenzyl)butanoic acid, coupled to reduction of NAD(+) to NADH by htyC. The product then undergoes transamination catalyzed by htyB to form L-homotyrosine. The polypeptide is Transaminase htyB (Aspergillus rugulosus (Emericella rugulosa)).